A 220-amino-acid polypeptide reads, in one-letter code: Deoxyribose-phosphate aldolase (220 aa).

Catalysis depends on D89, which acts as the Proton donor/acceptor. The active-site Schiff-base intermediate with acetaldehyde is the K151. Residue K180 is the Proton donor/acceptor of the active site.

It belongs to the DeoC/FbaB aldolase family. DeoC type 1 subfamily.

The protein localises to the cytoplasm. It carries out the reaction 2-deoxy-D-ribose 5-phosphate = D-glyceraldehyde 3-phosphate + acetaldehyde. Its pathway is carbohydrate degradation; 2-deoxy-D-ribose 1-phosphate degradation; D-glyceraldehyde 3-phosphate and acetaldehyde from 2-deoxy-alpha-D-ribose 1-phosphate: step 2/2. Catalyzes a reversible aldol reaction between acetaldehyde and D-glyceraldehyde 3-phosphate to generate 2-deoxy-D-ribose 5-phosphate. The polypeptide is Deoxyribose-phosphate aldolase (Streptococcus pneumoniae (strain 70585)).